Reading from the N-terminus, the 142-residue chain is Transcriptional regulator MraZ (142 aa).

SpoVT-AbrB domains lie at 5–47 (EFQH…PQHE) and 76–119 (ATEC…SKEE).

The protein belongs to the MraZ family. Forms oligomers.

The protein localises to the cytoplasm. It localises to the nucleoid. The protein is Transcriptional regulator MraZ of Desulforamulus reducens (strain ATCC BAA-1160 / DSM 100696 / MI-1) (Desulfotomaculum reducens).